We begin with the raw amino-acid sequence, 281 residues long: Pantothenate synthetase (281 aa).

17-24 (MGFLHEGH) contacts ATP. His-24 acts as the Proton donor in catalysis. Residue Gln-48 coordinates (R)-pantoate. Gln-48 contacts beta-alanine. 134 to 137 (GEKD) provides a ligand contact to ATP. Gln-140 provides a ligand contact to (R)-pantoate. Residues Val-163 and 176–179 (LSSR) each bind ATP.

This sequence belongs to the pantothenate synthetase family. Homodimer.

It localises to the cytoplasm. It catalyses the reaction (R)-pantoate + beta-alanine + ATP = (R)-pantothenate + AMP + diphosphate + H(+). It participates in cofactor biosynthesis; (R)-pantothenate biosynthesis; (R)-pantothenate from (R)-pantoate and beta-alanine: step 1/1. Functionally, catalyzes the condensation of pantoate with beta-alanine in an ATP-dependent reaction via a pantoyl-adenylate intermediate. This is Pantothenate synthetase from Deinococcus radiodurans (strain ATCC 13939 / DSM 20539 / JCM 16871 / CCUG 27074 / LMG 4051 / NBRC 15346 / NCIMB 9279 / VKM B-1422 / R1).